We begin with the raw amino-acid sequence, 349 residues long: Histidinol-phosphate aminotransferase (349 aa).

K210 carries the post-translational modification N6-(pyridoxal phosphate)lysine.

Belongs to the class-II pyridoxal-phosphate-dependent aminotransferase family. Histidinol-phosphate aminotransferase subfamily. As to quaternary structure, homodimer. It depends on pyridoxal 5'-phosphate as a cofactor.

It catalyses the reaction L-histidinol phosphate + 2-oxoglutarate = 3-(imidazol-4-yl)-2-oxopropyl phosphate + L-glutamate. It functions in the pathway amino-acid biosynthesis; L-histidine biosynthesis; L-histidine from 5-phospho-alpha-D-ribose 1-diphosphate: step 7/9. The protein is Histidinol-phosphate aminotransferase of Flavobacterium johnsoniae (strain ATCC 17061 / DSM 2064 / JCM 8514 / BCRC 14874 / CCUG 350202 / NBRC 14942 / NCIMB 11054 / UW101) (Cytophaga johnsonae).